The sequence spans 258 residues: Tritrans,polycis-undecaprenyl-diphosphate synthase (geranylgeranyl-diphosphate specific) (258 aa).

Residue Asp-37 is part of the active site. Asp-37 provides a ligand contact to Mg(2+). Substrate contacts are provided by residues 38 to 41 (GNRR), His-54, and 82 to 84 (STE). The active-site Proton acceptor is Asn-85. Substrate contacts are provided by residues Phe-86, Arg-88, Arg-207, and 213–215 (RIS). Glu-226 lines the Mg(2+) pocket.

It belongs to the UPP synthase family. As to quaternary structure, homodimer. Mg(2+) serves as cofactor.

It catalyses the reaction geranylgeranyl diphosphate + 7 isopentenyl diphosphate = tri-trans,hepta-cis-undecaprenyl diphosphate + 7 diphosphate. Catalyzes the sequential condensation of isopentenyl diphosphate (IPP) with geranylgeranyl diphosphate (GGPP) to yield (2Z,6Z,10Z,14Z,18Z,22Z,26Z,30E,34E,38E)-undecaprenyl diphosphate (tritrans,heptacis-UPP). It is probably the precursor of glycosyl carrier lipids. The polypeptide is Tritrans,polycis-undecaprenyl-diphosphate synthase (geranylgeranyl-diphosphate specific) (Thermoplasma acidophilum (strain ATCC 25905 / DSM 1728 / JCM 9062 / NBRC 15155 / AMRC-C165)).